Consider the following 95-residue polypeptide: Probable FAD-linked sulfhydryl oxidase OPG072 (95 aa).

Topologically, residues 1 to 8 are intravirion; that stretch reads MNPKHWGR. The region spanning 1 to 95 is the ERV/ALR sulfhydryl oxidase domain; that stretch reads MNPKHWGRAV…AIDVSKVKPL (95 aa). A helical membrane pass occupies residues 9-25; it reads AVWTIIFIVLSQAGLDG. Residues 26 to 95 lie on the Virion surface side of the membrane; sequence NIEACKRKLY…AIDVSKVKPL (70 aa). C43 and C46 are oxidised to a cystine.

It belongs to the orthopoxvirus OPG072 family. As to quaternary structure, interacts with OPG128; this interaction involves formation of a transient disulfide-bonded intermediate, allowing disulfide bond transfer. FAD serves as cofactor.

It is found in the virion membrane. The protein localises to the host cytoplasm. The enzyme catalyses 2 R'C(R)SH + O2 = R'C(R)S-S(R)CR' + H2O2. Its function is as follows. FAD-dependent sulfhydryl oxidase that catalyzes disulfide bond formation. The complete pathway for formation of disulfide bonds in intracellular virion membrane proteins sequentially involves thiol-disulfide transfer between OPG072, OPG128 and OPG088. This is Probable FAD-linked sulfhydryl oxidase OPG072 (OPG072) from Monkeypox virus.